Reading from the N-terminus, the 169-residue chain is EP300-interacting inhibitor of differentiation 1 (169 aa).

Residues 31–50 (GRGARGPAPEEGPMEEEAGP) form a disordered region. Positions 54–120 (RAQRGLFPEA…AGDALDGGFQ (67 aa)) are interaction with NR0B2. Residues 150–154 (LGCDE) carry the LXCXE motif motif.

In terms of assembly, interacts via its LXCXE motif with the entire pocket region of RB1. Interacts with EP300, NR0B2 and TRIM27. Expressed in all adult tissues examined and during embryogenesis.

Its subcellular location is the nucleus. It localises to the cytoplasm. In terms of biological role, interacts with RB1 and EP300 and acts as a repressor of MYOD1 transactivation. Inhibits EP300 and CBP histone acetyltransferase activity. May be involved in coupling cell cycle exit to the transcriptional activation of genes required for cellular differentiation. May act as a candidate coinhibitory factor for NR0B2 that can be directly linked to transcription inhibitory mechanisms. The polypeptide is EP300-interacting inhibitor of differentiation 1 (Mus musculus (Mouse)).